Consider the following 542-residue polypeptide: GATA-type transcription factor sreA (542 aa).

Polar residues predominate over residues 1–10 (MLTLRSSSDT). Residues 1-172 (MLTLRSSSDT…SAQNASGCGS (172 aa)) are disordered. Residues 44-63 (ADLRPDSFDASRSPDGDKAS) are compositionally biased toward basic and acidic residues. Low complexity-rich tracts occupy residues 75–117 (SSDQ…PKAS) and 148–168 (SSTSDPRASPAASDASAQNAS). The tract at residues 178 to 196 (CPGGGSCNGTGGAVGCDGC) is cystein-rich region (CRR). Positions 210-223 (APSARQARASPSAQ) are enriched in low complexity. The tract at residues 210-248 (APSARQARASPSAQTSEEQAQSGLDALDSASQDASGMPK) is disordered. The GATA-type zinc-finger motif lies at 250–274 (CQNCGTTLTPLWRRDDQGNTICNAC). The span at 289 to 300 (MKKTVIKRRKRV) shows a compositional bias: basic residues. 2 disordered regions span residues 289–408 (MKKT…PATR) and 461–525 (SNAP…REAE). 2 stretches are compositionally biased toward polar residues: residues 311 to 320 (AGSSDNSSVS) and 369 to 387 (KPTQSTSSPGLNTLINHSP). The span at 396–407 (ESTSAESAPPAT) shows a compositional bias: low complexity. The span at 464–483 (PARSQTQTQPQPGTRSYSPN) shows a compositional bias: polar residues. The stretch at 510–542 (DKVKAARRAQLQREAENMREALRAKERELASLK) forms a coiled coil.

It localises to the nucleus. Its function is as follows. GATA-type transcription repressor that regulates iron acquisition genes through specific binding the GATA sequence elements of target promoters. SreA targets include genes encoding a number of key iron-regulated factors such as the siderophore biosynthesis genes. Is dispensable for growth on keratin substrates. SreA represses the expression of hapX and the siderophore system during iron sufficient conditions by an iron-sensing mechanism, while hapX represses sreA and activates the siderophore system during iron-limiting conditions resulting in efficient iron uptake and inhibition of iron-consuming pathways. This is GATA-type transcription factor sreA from Arthroderma benhamiae (strain ATCC MYA-4681 / CBS 112371) (Trichophyton mentagrophytes).